The following is a 248-amino-acid chain: Trihelix transcription factor ENAP2 (248 aa).

Residues 1–13 show a composition bias toward polar residues; the sequence is METTTPQSKSSVS. The segment at 1-20 is disordered; that stretch reads METTTPQSKSSVSHRPPLGR. Positions 24–113 form a DNA-binding region, MADF; sequence WSEEATATLV…RLDVLIGPVV (90 aa). Residues 69 to 76 carry the Nuclear localization signal motif; that stretch reads RKKTDLQC. The segment at 123 to 150 is disordered; the sequence is SAPFKNHLNPTGSNSTGSSLEDDDEDDD. Over residues 130–141 the composition is skewed to polar residues; sequence LNPTGSNSTGSS. A coiled-coil region spans residues 190–210; the sequence is YERIEGKKQQMMIELEKQRME.

Interacts with the Agrobacterium tumefaciens virulence protein F (VirF) in the nucleus. Binds to EIN2 C-terminal region in the presence of ethylene.

Its subcellular location is the nucleus. It localises to the nucleoplasm. In terms of biological role, probable transcription regulator. Promotes histone acetylation during ethylene signaling in an EIN2-dependent manner, thus regulating positively ethylene-responsive genes. This Arabidopsis thaliana (Mouse-ear cress) protein is Trihelix transcription factor ENAP2.